The chain runs to 104 residues: Large ribosomal subunit protein eL30 (104 aa).

It belongs to the eukaryotic ribosomal protein eL30 family.

The polypeptide is Large ribosomal subunit protein eL30 (rpl30e) (Sulfolobus acidocaldarius (strain ATCC 33909 / DSM 639 / JCM 8929 / NBRC 15157 / NCIMB 11770)).